The sequence spans 77 residues: U14-theraphotoxin-Cg1a 2 (77 aa).

Residues 1-21 (MKTSVLLVILGIAAITVQCTA) form the signal peptide. The propeptide occupies 22–49 (SESVKQDSLRTFVDAVLGWNAEMASEAR). 3 cysteine pairs are disulfide-bonded: Cys50–Cys64, Cys57–Cys69, and Cys63–Cys75. At Lys77 the chain carries Lysine amide.

This sequence belongs to the neurotoxin 10 (Hwtx-1) family. 65 (Jztx-21) subfamily. Expressed by the venom gland.

The protein localises to the secreted. Probable ion channel inhibitor. The polypeptide is U14-theraphotoxin-Cg1a 2 (Chilobrachys guangxiensis (Chinese earth tiger tarantula)).